A 209-amino-acid chain; its full sequence is Large ribosomal subunit protein uL3 (209 aa).

The segment at 127-164 is disordered; that stretch reads NFSGGQRTHGQSDRLRAPGSVGGASDPSRTFKGTKMGG.

This sequence belongs to the universal ribosomal protein uL3 family. Part of the 50S ribosomal subunit. Forms a cluster with proteins L14 and L19.

One of the primary rRNA binding proteins, it binds directly near the 3'-end of the 23S rRNA, where it nucleates assembly of the 50S subunit. In Chlorobium phaeobacteroides (strain BS1), this protein is Large ribosomal subunit protein uL3.